The following is a 160-amino-acid chain: Large ribosomal subunit protein uL22c (160 aa).

It belongs to the universal ribosomal protein uL22 family. Part of the 50S ribosomal subunit.

It localises to the plastid. The protein localises to the chloroplast. In terms of biological role, this protein binds specifically to 23S rRNA. The globular domain of the protein is located near the polypeptide exit tunnel on the outside of the subunit, while an extended beta-hairpin is found that lines the wall of the exit tunnel in the center of the 70S ribosome. This chain is Large ribosomal subunit protein uL22c (rpl22), found in Arabidopsis thaliana (Mouse-ear cress).